The primary structure comprises 116 residues: Fluoride-specific ion channel FluC 1 (116 aa).

A run of 4 helical transmembrane segments spans residues 2 to 22 (LVLVGLAGAGAAVGALSRYGI), 33 to 53 (PLPIATLFINLTGALLLGWIL), 63 to 83 (IFLGTGIMGGYTTFSTMINEL), and 96 to 116 (WEYFGLSLVGGLVMVYLGTLI). Na(+)-binding residues include glycine 71 and threonine 74.

This sequence belongs to the fluoride channel Fluc/FEX (TC 1.A.43) family.

Its subcellular location is the cell membrane. The catalysed reaction is fluoride(in) = fluoride(out). Its activity is regulated as follows. Na(+) is not transported, but it plays an essential structural role and its presence is essential for fluoride channel function. Fluoride-specific ion channel. Important for reducing fluoride concentration in the cell, thus reducing its toxicity. The chain is Fluoride-specific ion channel FluC 1 from Lactiplantibacillus plantarum (strain ATCC BAA-793 / NCIMB 8826 / WCFS1) (Lactobacillus plantarum).